We begin with the raw amino-acid sequence, 464 residues long: Asparagine--tRNA ligase (464 aa).

It belongs to the class-II aminoacyl-tRNA synthetase family. As to quaternary structure, homodimer.

Its subcellular location is the cytoplasm. The enzyme catalyses tRNA(Asn) + L-asparagine + ATP = L-asparaginyl-tRNA(Asn) + AMP + diphosphate + H(+). This Clostridium beijerinckii (strain ATCC 51743 / NCIMB 8052) (Clostridium acetobutylicum) protein is Asparagine--tRNA ligase.